Consider the following 827-residue polypeptide: Inactive rhomboid protein 2 (827 aa).

Residues 1–87 form a disordered region; sequence MDSTDKNGES…GFRRQASLSQ (87 aa). The Cytoplasmic portion of the chain corresponds to 1–380; sequence MDSTDKNGES…HRPYFTYWLT (380 aa). Residue S60 is modified to Phosphoserine. Basic and acidic residues predominate over residues 64–77; sequence QRGRWQEGSSEKRP. Phosphoserine is present on residues S84, S88, S294, S296, and S299. Residues 381 to 401 form a helical membrane-spanning segment; it reads FVHIIITLLVICTYGIAPVGF. At 402–631 the chain is on the lumenal side; sequence AQHVTTQLVL…PDQFYRLWLS (230 aa). A helical transmembrane segment spans residues 632–652; that stretch reads LFLHAGVVHCLVSVVFQMTIL. Topologically, residues 653-663 are cytoplasmic; sequence RDLEKLAGWHR. Residues 664 to 684 form a helical membrane-spanning segment; that stretch reads IAIIFILSGITGNLASAIFLP. Residues 685-686 are Lumenal-facing; that stretch reads YR. A helical transmembrane segment spans residues 687–707; that stretch reads AEVGPAGSQFGLLACLFVELF. The Cytoplasmic segment spans residues 708–718; that stretch reads QSWQLLERPWK. The chain crosses the membrane as a helical span at residues 719 to 739; that stretch reads AFLNLSAIVLFLFICGLLPWI. The Lumenal portion of the chain corresponds to 740-744; it reads DNIAH. A helical membrane pass occupies residues 745–765; sequence IFGFLSGLLLAFAFLPYITFG. Residues 766–773 lie on the Cytoplasmic side of the membrane; sequence TSDKYRKR. Residues 774–794 form a helical membrane-spanning segment; it reads ALILVSLLVFAGLFASLVIWL. Over 795–827 the chain is Lumenal; the sequence is YVYPINWPWIEYLTCFPFTSRFCEKYELDQVLH.

The protein belongs to the peptidase S54 family. In terms of assembly, interacts with EGF. Interacts (via cytoplasmic N-terminus) with FRMD8/iTAP; this interaction leads to mutual protein stabilization. Interacts with ADAM17/TACE. Detected in retina and spleen.

It localises to the endoplasmic reticulum membrane. The protein localises to the cell membrane. In terms of biological role, regulates ADAM17 protease, a sheddase of the epidermal growth factor (EGF) receptor ligands and TNF, thereby plays a role in sleep, cell survival, proliferation, migration and inflammation. Does not exhibit any protease activity on its own. This Canis lupus familiaris (Dog) protein is Inactive rhomboid protein 2 (RHBDF2).